Here is a 198-residue protein sequence, read N- to C-terminus: Probable GTP-binding protein EngB (198 aa).

The EngB-type G domain occupies 22 to 196 (NLSEIAFVGR…WNWIKGQAEL (175 aa)). GTP contacts are provided by residues 30-37 (GRSNVGKS), 57-61 (GKTQT), 75-78 (DVPG), 142-145 (TKAD), and 175-177 (FSA). Mg(2+) is bound by residues Ser-37 and Thr-59.

It belongs to the TRAFAC class TrmE-Era-EngA-EngB-Septin-like GTPase superfamily. EngB GTPase family. Mg(2+) serves as cofactor.

Necessary for normal cell division and for the maintenance of normal septation. This chain is Probable GTP-binding protein EngB, found in Oenococcus oeni (strain ATCC BAA-331 / PSU-1).